The chain runs to 79 residues: Acyl carrier protein (79 aa).

A Carrier domain is found at 4–79; sequence AEIKDKVYDI…QAIDYIVNKK (76 aa). S39 carries the post-translational modification O-(pantetheine 4'-phosphoryl)serine.

This sequence belongs to the acyl carrier protein (ACP) family. In terms of processing, 4'-phosphopantetheine is transferred from CoA to a specific serine of apo-ACP by AcpS. This modification is essential for activity because fatty acids are bound in thioester linkage to the sulfhydryl of the prosthetic group.

The protein resides in the cytoplasm. Its pathway is lipid metabolism; fatty acid biosynthesis. In terms of biological role, carrier of the growing fatty acid chain in fatty acid biosynthesis. This is Acyl carrier protein from Pelodictyon phaeoclathratiforme (strain DSM 5477 / BU-1).